The following is a 1193-amino-acid chain: Stress response protein nst1 (1193 aa).

Disordered stretches follow at residues 1–197 (MVPA…SHNI), 288–368 (QGSF…TRAA), 422–468 (ESLH…EQRM), 508–815 (MEEE…MVAR), 857–942 (MPPG…TQRD), 966–988 (TLSQ…RASF), and 1145–1193 (DNNS…PMGF). Positions 10–29 (SPSSTMLNSSSTTAHAAPST) are enriched in low complexity. Over residues 53-63 (NRKKQKRRQKQ) the composition is skewed to basic residues. Over residues 64–73 (AARLAERQLA) the composition is skewed to low complexity. Positions 76–90 (HVSTDDTTQNGSSHA) are enriched in polar residues. The span at 91–128 (NPERYHSDDGGADGPDHEQPTNGDVYDKDGQDSMDAHV) shows a compositional bias: basic and acidic residues. A compositionally biased stretch (polar residues) spans 129 to 140 (DSQNPQGPNGTE). Residues 146–160 (TGRKSKKKKGKKARN) show a composition bias toward basic residues. A compositionally biased stretch (low complexity) spans 169–182 (TSTPMSTPSVSMSH). Residues 312-321 (GQHTRTQGQF) are compositionally biased toward polar residues. Composition is skewed to acidic residues over residues 332-364 (TEED…EDEE) and 434-463 (DDED…DAMT). A coiled-coil region spans residues 448–659 (SQEEEDYEED…EEQAKKDTAK (212 aa)). Basic and acidic residues-rich tracts occupy residues 508-527 (MEEE…EAQK) and 537-675 (QAKE…DQAK). The segment covering 722–740 (RQPSQQDSHSSSPHSQAPS) has biased composition (low complexity). Positions 741–769 (TDPSQASLSPRSMPVSQSSGVASGNSQQG) are enriched in polar residues. A compositionally biased stretch (low complexity) spans 914-926 (PISRPSPIKRPSS). Residues 933-942 (KGGDRTTQRD) show a composition bias toward basic and acidic residues. Over residues 972–986 (PGATAPGTFPGPARA) the composition is skewed to low complexity. A compositionally biased stretch (polar residues) spans 1182-1193 (VLRQYSSPPMGF).

It belongs to the NST1 family.

The protein localises to the cytoplasm. May act as a negative regulator of salt tolerance. The protein is Stress response protein nst1 (nst1) of Neosartorya fischeri (strain ATCC 1020 / DSM 3700 / CBS 544.65 / FGSC A1164 / JCM 1740 / NRRL 181 / WB 181) (Aspergillus fischerianus).